Reading from the N-terminus, the 480-residue chain is MKEFWQTCVSRLEQELPPQQISAWIRPLVPLAYDEAQAVLRVAAPNRFKLDWVRKNFSHQIEALAAEWYQRPVQVTFELPGTSSAPRIPMAVPRPVAVSVPAVVAAVQQASEPAPPAPAPAPAAPAPAPASADAANIVYERSRLNTDLTFENFVTGKANQLARAAALQVAENPGTSYNPLFLYGGVGLGKTHLIHAIGNAMVAAGTGVRVRYVHADQYVSDVVKAYQRKAFDDFKRYYHSLDLLLIDDIQFFSGKNRTQEEFFYAFEAMVAQRKQIIITSDTYPKELSGIDSRLISRFDSGLTVAIEPPELEMRVAILLRKAESEGVPMPEEVAFFIAKHLRSNVRELEGALRKVLAYARFHGRDVLTVDVCKEALKDLLSVSNGQITVENIQKTVADFYKIKVADMYSKRRPANIALPRQVAMYLAKELTQKSLPEIGDLFGGRDHTTVLHAVRKISDARAKQAELNHTLHVLEQTLKG.

A domain I, interacts with DnaA modulators region spans residues 1–71 (MKEFWQTCVS…EALAAEWYQR (71 aa)). A domain II region spans residues 71-142 (RPVQVTFELP…DAANIVYERS (72 aa)). Positions 143-359 (RLNTDLTFEN…GALRKVLAYA (217 aa)) are domain III, AAA+ region. ATP-binding residues include G187, G189, K190, and T191. The interval 360–480 (RFHGRDVLTV…LHVLEQTLKG (121 aa)) is domain IV, binds dsDNA.

The protein belongs to the DnaA family. In terms of assembly, oligomerizes as a right-handed, spiral filament on DNA at oriC.

Its subcellular location is the cytoplasm. Plays an essential role in the initiation and regulation of chromosomal replication. ATP-DnaA binds to the origin of replication (oriC) to initiate formation of the DNA replication initiation complex once per cell cycle. Binds the DnaA box (a 9 base pair repeat at the origin) and separates the double-stranded (ds)DNA. Forms a right-handed helical filament on oriC DNA; dsDNA binds to the exterior of the filament while single-stranded (ss)DNA is stabiized in the filament's interior. The ATP-DnaA-oriC complex binds and stabilizes one strand of the AT-rich DNA unwinding element (DUE), permitting loading of DNA polymerase. After initiation quickly degrades to an ADP-DnaA complex that is not apt for DNA replication. Binds acidic phospholipids. The chain is Chromosomal replication initiator protein DnaA from Bordetella bronchiseptica (strain ATCC BAA-588 / NCTC 13252 / RB50) (Alcaligenes bronchisepticus).